A 751-amino-acid polypeptide reads, in one-letter code: Cellulose synthase-like protein G3 (751 aa).

A run of 2 helical transmembrane segments spans residues 47-67 (IYAV…VHSL) and 72-92 (TTLI…MWAT). Active-site residues include Asp-161 and Asp-466. 6 helical membrane-spanning segments follow: residues 543–563 (CWAF…LALL), 577–597 (FWLY…DFVL), 617–639 (FSSH…THGF), 674–694 (TVAI…FAWG), 697–717 (LVLE…IYEA), and 731–751 (VCFV…VFLK).

It belongs to the glycosyltransferase 2 family. Plant cellulose synthase-like G subfamily.

The protein localises to the golgi apparatus membrane. Thought to be a Golgi-localized beta-glycan synthase that polymerize the backbones of noncellulosic polysaccharides (hemicelluloses) of plant cell wall. This Arabidopsis thaliana (Mouse-ear cress) protein is Cellulose synthase-like protein G3 (CSLG3).